Consider the following 467-residue polypeptide: Venom serine carboxypeptidase (467 aa).

The first 18 residues, M1–G18, serve as a signal peptide directing secretion. Residues N130 and N169 are each glycosylated (N-linked (GlcNAc...) asparagine). S202 is an active-site residue. N-linked (GlcNAc...) asparagine glycans are attached at residues N304, N322, and N344. Catalysis depends on residues D387 and H444.

It belongs to the peptidase S10 family. In terms of tissue distribution, expressed by the venom duct.

It localises to the secreted. The catalysed reaction is Release of a C-terminal amino acid with broad specificity.. This is Venom serine carboxypeptidase from Apis mellifera (Honeybee).